A 351-amino-acid chain; its full sequence is Protein MGF 360-12L (351 aa).

Residues 57–89 (DLNMALVKAVKENNYSLIKLFTEWGANINYGLI) form an ANK repeat.

It belongs to the asfivirus MGF 360 family.

In terms of biological role, plays a role in virus cell tropism, and may be required for efficient virus replication in macrophages. The sequence is that of Protein MGF 360-12L from Ornithodoros (relapsing fever ticks).